We begin with the raw amino-acid sequence, 444 residues long: Homogentisate 1,2-dioxygenase (444 aa).

H298 acts as the Proton acceptor in catalysis. The Fe cation site is built by H341 and E347. Positions 356 and 377 each coordinate homogentisate. H377 serves as a coordination point for Fe cation.

It belongs to the homogentisate dioxygenase family. Hexamer; dimer of trimers. Fe cation serves as cofactor.

The enzyme catalyses homogentisate + O2 = 4-maleylacetoacetate + H(+). It functions in the pathway amino-acid degradation; L-phenylalanine degradation; acetoacetate and fumarate from L-phenylalanine: step 4/6. Functionally, involved in the catabolism of homogentisate (2,5-dihydroxyphenylacetate or 2,5-OH-PhAc), a central intermediate in the degradation of phenylalanine and tyrosine. Catalyzes the oxidative ring cleavage of the aromatic ring of homogentisate to yield maleylacetoacetate. This is Homogentisate 1,2-dioxygenase from Burkholderia ambifaria (strain ATCC BAA-244 / DSM 16087 / CCUG 44356 / LMG 19182 / AMMD) (Burkholderia cepacia (strain AMMD)).